The following is a 474-amino-acid chain: Calcium/calmodulin-dependent protein kinase type IV (474 aa).

Phosphoserine; by autocatalysis occurs at positions 11 and 12. Residues 42-296 enclose the Protein kinase domain; sequence FEVESELGRG…TFQALQHPWV (255 aa). Residues 48–56 and Lys-71 contribute to the ATP site; that span reads LGRGATSIV. Thr-53 carries an O-linked (GlcNAc) threonine glycan. The O-linked (GlcNAc) serine glycan is linked to Ser-54. Residue Ser-133 is glycosylated (O-linked (GlcNAc) serine). Asp-160 functions as the Proton acceptor in the catalytic mechanism. An O-linked (GlcNAc) serine glycan is attached at Ser-185. Thr-196 carries the phosphothreonine; by CaMKK1 and CaMKK2 modification. The segment at 297-336 is autoinhibitory domain; sequence TGKAANFVHMDTAQKKLQEFNARRKLKAAVKAVVASSRLG. Positions 302 to 319 are PP2A-binding; it reads NFVHMDTAQKKLQEFNAR. The segment at 318–337 is calmodulin-binding; the sequence is ARRKLKAAVKAVVASSRLGS. At Ser-332 the chain carries Phosphoserine; by autocatalysis. Positions 336–474 are disordered; that stretch reads GSASSSHTNI…PQQDAILPEY (139 aa). The residue at position 337 (Ser-337) is a Phosphoserine. O-linked (GlcNAc) serine glycans are attached at residues Ser-340, Ser-341, and Ser-352. Polar residues predominate over residues 342–356; it reads HTNIQESNKASSEAQ. Over residues 360–392 the composition is skewed to basic and acidic residues; the sequence is DGKDKTDPLENKMQAGDHEAAKAAADETMKLQS. A compositionally biased stretch (acidic residues) spans 393-413; the sequence is EEVEEEEGVKEEEEEEEEEEE. Residues 431-454 show a composition bias toward basic and acidic residues; sequence QEMKRNSEETLKSVEEEMDPKAEE. Phosphoserine occurs at positions 437 and 443.

Belongs to the protein kinase superfamily. CAMK Ser/Thr protein kinase family. CaMK subfamily. Monomer. Interacts with protein phosphatase 2A (PPP2CA/PPP2CB); the interaction is mutually exclusive with binding to Ca(2+)/calmodulin. Post-translationally, phosphorylated by CaMKK1 and CaMKK2 on Thr-196. Dephosphorylated by protein phosphatase 2A. Autophosphorylated on Ser-11 and Ser-12. In terms of processing, glycosylation at Ser-185 modulates the phosphorylation of CaMK4 at Thr-196 and negatively regulates its activity toward CREB1 in basal conditions and during early inomycin stimulation. The N-terminus of calspermin is blocked. Isoform 1 is expressed in brain and isoform 2 is testis specific.

The protein localises to the cytoplasm. Its subcellular location is the nucleus. The enzyme catalyses L-seryl-[protein] + ATP = O-phospho-L-seryl-[protein] + ADP + H(+). It carries out the reaction L-threonyl-[protein] + ATP = O-phospho-L-threonyl-[protein] + ADP + H(+). Its activity is regulated as follows. Activated by Ca(2+)/calmodulin. Binding of calmodulin results in conformational change that relieves intrasteric autoinhibition and allows phosphorylation of Thr-196 within the activation loop by CaMKK1 or CaMKK2. Phosphorylation of Thr-196 results in a 10-20-fold increase in total activity to generate Ca(2+)/calmodulin-independent activity. Autophosphorylation of the N-terminus Ser-11 and Ser-12 is required for full activation. Inactivated by protein phosphatase 2A (PPP2CA/PPP2CB) which dephosphorylates Thr-196, thereby terminating autonomous activity and helping to maintain the enzyme in its autoinhibited state. Functionally, calcium/calmodulin-dependent protein kinase that operates in the calcium-triggered CaMKK-CaMK4 signaling cascade and regulates, mainly by phosphorylation, the activity of several transcription activators, such as CREB1, MEF2D, JUN and RORA, which play pivotal roles in immune response, inflammation, and memory consolidation. In the thymus, regulates the CD4(+)/CD8(+) double positive thymocytes selection threshold during T-cell ontogeny. In CD4 memory T-cells, is required to link T-cell antigen receptor (TCR) signaling to the production of IL2, IFNG and IL4 (through the regulation of CREB and MEF2). Regulates the differentiation and survival phases of osteoclasts and dendritic cells (DCs). Mediates DCs survival by linking TLR4 and the regulation of temporal expression of BCL2. Phosphorylates the transcription activator CREB1 on 'Ser-133' in hippocampal neuron nuclei and contribute to memory consolidation and long term potentiation (LTP) in the hippocampus. Can activate the MAP kinases MAPK1/ERK2, MAPK8/JNK1 and MAPK14/p38 and stimulate transcription through the phosphorylation of ELK1 and ATF2. Can also phosphorylate in vitro CREBBP, PRM2, MEF2A and STMN1/OP18. In terms of biological role, heat-stable, acidic, calmodulin-binding protein. The protein is Calcium/calmodulin-dependent protein kinase type IV (Camk4) of Rattus norvegicus (Rat).